The following is a 312-amino-acid chain: MIIVTGGAGFIGSNIVKALNDEGYKDILVVDNLKDGTKFINLADLDIADYMDKEEFIASILAGDDFGDIDAIFHEGACSSTTEWDGKYMMDNNYQYSKELLHYCLERRTPFLYASSAATYGGRTDNFIEERQYEKPLNVYGYSKFLFDQYVREILPQADSQICGFRYFNVYGPREGHKGSMASVAFHLNNQINQRQNPKLFAGSEGFQRDFIYVGDAAAVNLWFWKNGVSGIYNCGTGRAESFQAVADAVVECHKDKSLTVEHIDFPEHLKGRYQRFTQADLTKLRAAGYDKPFKTVAEGVTEYMHWLNQDK.

NADP(+) contacts are provided by residues 10-11, 31-32, K38, K53, 75-79, and N92; these read FI, DN, and EGACS. Residue Y140 is the Proton acceptor of the active site. K144 serves as a coordination point for NADP(+). N169 serves as a coordination point for substrate. 2 residues coordinate NADP(+): V170 and K178. K178 (proton acceptor) is an active-site residue. Residues S180, H187, 201-204, R209, and Y274 each bind substrate; that span reads FAGS.

This sequence belongs to the NAD(P)-dependent epimerase/dehydratase family. HldD subfamily. In terms of assembly, homopentamer. NADP(+) serves as cofactor.

The catalysed reaction is ADP-D-glycero-beta-D-manno-heptose = ADP-L-glycero-beta-D-manno-heptose. It functions in the pathway nucleotide-sugar biosynthesis; ADP-L-glycero-beta-D-manno-heptose biosynthesis; ADP-L-glycero-beta-D-manno-heptose from D-glycero-beta-D-manno-heptose 7-phosphate: step 4/4. Its pathway is bacterial outer membrane biogenesis; LPS core biosynthesis. Its function is as follows. Catalyzes the interconversion between ADP-D-glycero-beta-D-manno-heptose and ADP-L-glycero-beta-D-manno-heptose via an epimerization at carbon 6 of the heptose. The protein is ADP-L-glycero-D-manno-heptose-6-epimerase of Photorhabdus laumondii subsp. laumondii (strain DSM 15139 / CIP 105565 / TT01) (Photorhabdus luminescens subsp. laumondii).